The following is a 400-amino-acid chain: Elongation factor Tu 2 (400 aa).

The region spanning 10–209 is the tr-type G domain; the sequence is KPHVNIGTIG…AVDEYIPTPQ (200 aa). Residues 19–26 are G1; that stretch reads GHVDHGKT. 19–26 contributes to the GTP binding site; that stretch reads GHVDHGKT. Mg(2+) is bound at residue Thr26. The tract at residues 60 to 64 is G2; it reads GITIN. The interval 81 to 84 is G3; sequence DCPG. GTP contacts are provided by residues 81–85 and 136–139; these read DCPGH and NKAD. The G4 stretch occupies residues 136–139; it reads NKAD. The tract at residues 174 to 176 is G5; that stretch reads SAL.

This sequence belongs to the TRAFAC class translation factor GTPase superfamily. Classic translation factor GTPase family. EF-Tu/EF-1A subfamily. Monomer.

The protein localises to the cytoplasm. The catalysed reaction is GTP + H2O = GDP + phosphate + H(+). GTP hydrolase that promotes the GTP-dependent binding of aminoacyl-tRNA to the A-site of ribosomes during protein biosynthesis. In Pelotomaculum thermopropionicum (strain DSM 13744 / JCM 10971 / SI), this protein is Elongation factor Tu 2.